The sequence spans 120 residues: Natriuretic peptide (120 aa).

A signal peptide spans 1-25 (MVGLSRLADGGLLLVLALLPLALDG). The propeptide occupies 26–70 (KPAPLEKAPMAPARIIPYLRPVGKESRAALDRMVPPEDGDSRRLE). A disulfide bridge connects residues Cys81 and Cys97. Positions 110 to 120 (ILPYLRPIRKE) are excised as a propeptide.

It belongs to the natriuretic peptide family. As to expression, expressed by the venom gland.

The protein resides in the secreted. Natriuretic peptide that dose-dependently induces the rapid relaxation of rat aortic strips phenylephrine-precontracted. Acts by stimulating cGMP production in a dose-dependent manner (by probably activating NPR1 and/or NPR2). May also show potent hypotensive effects. This is Natriuretic peptide from Micrurus altirostris (Uruguayan coral snake).